A 271-amino-acid polypeptide reads, in one-letter code: Glutamate racemase (271 aa).

Substrate is bound by residues 10–11 and 42–43; these read DS and YG. Catalysis depends on cysteine 73, which acts as the Proton donor/acceptor. Position 74-75 (74-75) interacts with substrate; that stretch reads NT. Catalysis depends on cysteine 183, which acts as the Proton donor/acceptor. 184-185 is a substrate binding site; that stretch reads TH.

This sequence belongs to the aspartate/glutamate racemases family.

The enzyme catalyses L-glutamate = D-glutamate. It participates in cell wall biogenesis; peptidoglycan biosynthesis. In terms of biological role, provides the (R)-glutamate required for cell wall biosynthesis. The protein is Glutamate racemase of Lactococcus lactis subsp. cremoris (strain SK11).